The following is a 298-amino-acid chain: Tyrosine recombinase XerC (298 aa).

In terms of domain architecture, Core-binding (CB) spans 2–88; that stretch reads TDLHTDVERY…ALRSFFDWLV (87 aa). The 180-residue stretch at 109-288 folds into the Tyr recombinase domain; sequence HLPKNIDVDD…DFQHLASVYD (180 aa). Catalysis depends on residues Arg148, Lys172, His240, Arg243, and His266. The O-(3'-phospho-DNA)-tyrosine intermediate role is filled by Tyr275.

This sequence belongs to the 'phage' integrase family. XerC subfamily. As to quaternary structure, forms a cyclic heterotetrameric complex composed of two molecules of XerC and two molecules of XerD, in which XerC interacts with XerD via its C-terminal region, XerD interacts with XerC via its C-terminal region and so on.

It is found in the cytoplasm. With respect to regulation, ftsK may regulate the catalytic switch between XerC and XerD in the heterotetrameric complex during the two steps of the recombination process. Its function is as follows. Site-specific tyrosine recombinase, which acts by catalyzing the cutting and rejoining of the recombining DNA molecules. Binds cooperatively to specific DNA consensus sequences that are separated from XerD binding sites by a short central region, forming the heterotetrameric XerC-XerD complex that recombines DNA substrates. The complex is essential to convert dimers of the bacterial chromosome into monomers to permit their segregation at cell division. It also contributes to the segregational stability of plasmids. In the complex XerC specifically exchanges the top DNA strands. The chain is Tyrosine recombinase XerC from Escherichia coli (strain 55989 / EAEC).